The following is a 246-amino-acid chain: 14-3-3 protein beta/alpha (246 aa).

An N-acetylmethionine; in 14-3-3 protein beta/alpha; alternate modification is found at Met1. Residue Met1 is modified to N-acetylmethionine. Thr2 carries the N-acetylthreonine; in 14-3-3 protein beta/alpha, N-terminally processed modification. Residue Thr2 is modified to Phosphothreonine. Lys5 carries the N6-acetyllysine modification. An N6-acetyllysine; alternate modification is found at Lys51. A Glycyl lysine isopeptide (Lys-Gly) (interchain with G-Cter in SUMO2); alternate cross-link involves residue Lys51. The residue at position 60 (Ser60) is a Phosphoserine. Lys70 carries the post-translational modification N6-acetyllysine. 3'-nitrotyrosine occurs at positions 84 and 106. N6-acetyllysine is present on Lys117. Residues Ser186 and Ser232 each carry the phosphoserine modification.

It belongs to the 14-3-3 family. As to quaternary structure, homodimer. Interacts with SAMSN1 and PRKCE. Interacts with AKAP13. Interacts with SSH1 and TORC2/CRTC2. Interacts with ABL1; the interaction results in cytoplasmic location of ABL1 and inhibition of cABL-mediated apoptosis. Interacts with ROR2 (dimer); the interaction results in phosphorylation of YWHAB on tyrosine residues. Interacts with GAB2. Interacts with YAP1 (phosphorylated form). Interacts with the phosphorylated (by AKT1) form of SRPK2. Interacts with PKA-phosphorylated AANAT. Interacts with MYO1C. Interacts with SIRT2. Interacts with the 'Thr-369' phosphorylated form of DAPK2. Interacts with PI4KB, TBC1D22A and TBC1D22B. Interacts with the 'Ser-1134' and 'Ser-1161' phosphorylated form of SOS1. Interacts (via phosphorylated form) with YWHAB; this interaction occurs in a protein kinase AKT1-dependent manner. Interacts with SLITRK1. Interacts with SYNPO2 (phosphorylated form); YWHAB competes with ACTN2 for interaction with SYNPO2. Interacts with RIPOR2 (via phosphorylated form) isoform 2; this interaction occurs in a chemokine-dependent manner and does not compete for binding of RIPOR2 with RHOA nor blocks inhibition of RIPOR2-mediated RHOA activity. Interacts with MARK2 and MARK3. Interacts with TESK1; the interaction is dependent on the phosphorylation of TESK1 'Ser-437' and inhibits TESK1 kinase activity. Interacts with MEFV. Interacts with HDAC4. Interacts with ADAM22 (via C-terminus). In terms of assembly, (Microbial infection) Interacts with herpes simplex virus 1 protein UL46. (Microbial infection) Probably interacts with Chlamydia trachomatis protein IncG. Post-translationally, the alpha, brain-specific form differs from the beta form in being phosphorylated. Phosphorylated on Ser-60 by protein kinase C delta type catalytic subunit in a sphingosine-dependent fashion.

It localises to the cytoplasm. The protein localises to the melanosome. It is found in the vacuole membrane. Functionally, adapter protein implicated in the regulation of a large spectrum of both general and specialized signaling pathways. Binds to a large number of partners, usually by recognition of a phosphoserine or phosphothreonine motif. Binding generally results in the modulation of the activity of the binding partner. Negative regulator of osteogenesis. Blocks the nuclear translocation of the phosphorylated form (by AKT1) of SRPK2 and antagonizes its stimulatory effect on cyclin D1 expression resulting in blockage of neuronal apoptosis elicited by SRPK2. Negative regulator of signaling cascades that mediate activation of MAP kinases via AKAP13. The protein is 14-3-3 protein beta/alpha (YWHAB) of Homo sapiens (Human).